We begin with the raw amino-acid sequence, 87 residues long: MAGASLGARFYRQIKRHPGIIPMIGLICLGMGSAALYLLRLALRSPDVCWDRKNNPEPWNRLSPNDQYKFLAVSTDYKKLKKDRPDF.

Belongs to the complex I NDUFA4 subunit family.

This Homo sapiens (Human) protein is NADH dehydrogenase [ubiquinone] 1 alpha subcomplex subunit 4-like 2 (NDUFA4L2).